A 361-amino-acid polypeptide reads, in one-letter code: Peptide chain release factor 1 (361 aa).

Gln-235 carries the post-translational modification N5-methylglutamine.

Belongs to the prokaryotic/mitochondrial release factor family. Post-translationally, methylated by PrmC. Methylation increases the termination efficiency of RF1.

It localises to the cytoplasm. Its function is as follows. Peptide chain release factor 1 directs the termination of translation in response to the peptide chain termination codons UAG and UAA. This Buchnera aphidicola subsp. Schizaphis graminum (strain Sg) protein is Peptide chain release factor 1.